Consider the following 190-residue polypeptide: Potassium-transporting ATPase KdpC subunit (190 aa).

The helical transmembrane segment at Leu10–Gly30 threads the bilayer.

It belongs to the KdpC family. The system is composed of three essential subunits: KdpA, KdpB and KdpC.

Its subcellular location is the cell inner membrane. Part of the high-affinity ATP-driven potassium transport (or Kdp) system, which catalyzes the hydrolysis of ATP coupled with the electrogenic transport of potassium into the cytoplasm. This subunit acts as a catalytic chaperone that increases the ATP-binding affinity of the ATP-hydrolyzing subunit KdpB by the formation of a transient KdpB/KdpC/ATP ternary complex. This is Potassium-transporting ATPase KdpC subunit from Cronobacter sakazakii (strain ATCC BAA-894) (Enterobacter sakazakii).